Reading from the N-terminus, the 298-residue chain is Protoheme IX farnesyltransferase (298 aa).

9 consecutive transmembrane segments (helical) span residues 26-46 (VVGH…PGVP), 52-72 (FWAS…NHFL), 98-118 (VVGF…AFVN), 120-140 (LTAF…TVYL), 148-168 (IVIG…AVTG), 174-194 (ALLL…AYAI), 214-234 (IAFT…AGLM), 241-261 (SGEI…YYAI), and 278-298 (YSLV…YIVL).

This sequence belongs to the UbiA prenyltransferase family. Protoheme IX farnesyltransferase subfamily.

The protein localises to the cell inner membrane. It catalyses the reaction heme b + (2E,6E)-farnesyl diphosphate + H2O = Fe(II)-heme o + diphosphate. The protein operates within porphyrin-containing compound metabolism; heme O biosynthesis; heme O from protoheme: step 1/1. In terms of biological role, converts heme B (protoheme IX) to heme O by substitution of the vinyl group on carbon 2 of heme B porphyrin ring with a hydroxyethyl farnesyl side group. In Methylococcus capsulatus (strain ATCC 33009 / NCIMB 11132 / Bath), this protein is Protoheme IX farnesyltransferase.